The chain runs to 491 residues: Probable ribonuclease FAU-1 (491 aa).

It belongs to the FAU-1 family.

Functionally, probable RNase involved in rRNA stability through maturation and/or degradation of precursor rRNAs. Binds to RNA in loop regions with AU-rich sequences. In Thermofilum pendens (strain DSM 2475 / Hrk 5), this protein is Probable ribonuclease FAU-1.